Here is a 415-residue protein sequence, read N- to C-terminus: Extracellular signal-regulated kinase 1 (415 aa).

The Protein kinase domain occupies 66-369 (YQILEIVGEG…VEDALKHPYL (304 aa)). ATP contacts are provided by residues 72–80 (VGEGAYGIV) and K95. Catalysis depends on D190, which acts as the Proton acceptor. Position 226 is a phosphothreonine (T226). Positions 226–228 (TEY) match the TXY motif. Phosphotyrosine is present on Y228.

This sequence belongs to the protein kinase superfamily. CMGC Ser/Thr protein kinase family. MAP kinase subfamily. Mg(2+) is required as a cofactor. In terms of processing, dually phosphorylated on Thr-226 and Tyr-228, which activates the enzyme.

The enzyme catalyses L-seryl-[protein] + ATP = O-phospho-L-seryl-[protein] + ADP + H(+). It catalyses the reaction L-threonyl-[protein] + ATP = O-phospho-L-threonyl-[protein] + ADP + H(+). Activated by tyrosine and threonine phosphorylation. This is Extracellular signal-regulated kinase 1 (CEK1) from Candida albicans (strain WO-1) (Yeast).